Here is a 462-residue protein sequence, read N- to C-terminus: Cytokine-like nuclear factor N-PAC (462 aa).

Residues 8–66 (IGDLVWGKLGRYPPWPGKVVSPPKDLKKPRGKKCFFVKFFGTEDHAWIKVEQLKPYHPH) form the PWWP domain. Over residues 91 to 111 (KKAKGKDQSHSDDKSKSDKGR) the composition is skewed to basic and acidic residues. Positions 91–139 (KKAKGKDQSHSDDKSKSDKGRKAAKPMKIIEEDDEDAFKGGSSDKPASS) are disordered. A dehydrogenase domain region spans residues 169–462 (GSITPTDKRI…MSAVYRAYIH (294 aa)). NAD(+) is bound by residues 179–193 (GFLG…VVSN), threonine 270, and lysine 414.

It belongs to the HIBADH-related family. NP60 subfamily. As to quaternary structure, homotetramere. Binds to mononucleosomes.

It localises to the nucleus. The protein resides in the chromosome. In terms of biological role, may have oxidoreductase activity. Regulates p38 MAP kinase activity by mediating stress activation of mapk14 and specifically regulating mapk14 signaling. Its function is as follows. Cytokine-like nuclear factor with chromatin gene reader activity involved in chromatin modification and regulation of gene expression. Acts as a nucleosome-destabilizing factor that is recruited to genes during transcriptional activation. Recognizes and binds histone H3 without a preference for specific epigenetic markers and also binds DNA. Interacts with KDM1B and promotes its histone demethylase activity by facilitating the capture of H3 tails, they form a multifunctional enzyme complex that modifies transcribed chromatin and facilitates Pol II transcription through nucleosomes. This Danio rerio (Zebrafish) protein is Cytokine-like nuclear factor N-PAC (glyr1).